The sequence spans 461 residues: Phytase PHO112 (461 aa).

3 disulfide bridges follow: Cys62–Cys384, Cys261–Cys274, and Cys404–Cys412. 1D-myo-inositol hexakisphosphate-binding residues include Arg72, His73, Arg76, and Ser79. Residue His73 is the Nucleophile of the active site. N-linked (GlcNAc...) asparagine glycans are attached at residues Asn97 and Asn157. 1D-myo-inositol hexakisphosphate is bound at residue Arg169. N-linked (GlcNAc...) asparagine glycosylation is found at Asn229 and Asn248. Residue Lys293 coordinates 1D-myo-inositol hexakisphosphate. 2 N-linked (GlcNAc...) asparagine glycosylation sites follow: Asn302 and Asn313. The 1D-myo-inositol hexakisphosphate site is built by His334 and Asp335. Residues Asn437 and Asn452 are each glycosylated (N-linked (GlcNAc...) asparagine).

Belongs to the histidine acid phosphatase family. Monomer.

Its subcellular location is the secreted. It carries out the reaction 1D-myo-inositol hexakisphosphate + H2O = 1D-myo-inositol 1,2,4,5,6-pentakisphosphate + phosphate. It catalyses the reaction 1D-myo-inositol 1,2,4,5,6-pentakisphosphate + H2O = 1D-myo-inositol 1,2,5,6-tetrakisphosphate + phosphate. The catalysed reaction is 1D-myo-inositol 1,2,5,6-tetrakisphosphate + H2O = 1D-myo-inositol 1,2,6-trisphosphate + phosphate. The enzyme catalyses 1D-myo-inositol 1,2,6-trisphosphate + H2O = 1D-myo-inositol 1,2-bisphosphate + phosphate. It carries out the reaction 1D-myo-inositol 1,2-bisphosphate + H2O = 1D-myo-inositol 2-phosphate + phosphate. Catalyzes the phosphate monoester hydrolysis of phytic acid (myo-inositol hexakisphosphate), which results in the stepwise formation of myo-inositol pentakis-, tetrakis-, tris-, bis-, and monophosphates, as well as the liberation of inorganic phosphate. Myo-inositol 2-monophosphate is the end product. Responsible of about 25% of the phytase activity. The residual phytase activity might be contributed by other cytosolic or cellular enzymes such as acid phosphatase that also degraded the substrate phytate. Is essential for human tissue damage during infection. The sequence is that of Phytase PHO112 (PHO112) from Candida albicans (strain SC5314 / ATCC MYA-2876) (Yeast).